Here is a 447-residue protein sequence, read N- to C-terminus: GTPase Der (447 aa).

2 EngA-type G domains span residues 4 to 165 (QIIT…PEEE) and 180 to 357 (LQIV…KIWN). Residues 10–17 (GRPNVGKS), 57–61 (DTPGL), 119–122 (NKCE), 186–193 (GRPNAGKS), 233–237 (DTAGL), and 298–301 (NKWD) contribute to the GTP site. A KH-like domain is found at 358-443 (KKITTSKLNE…PIRFTYVKTK (86 aa)).

It belongs to the TRAFAC class TrmE-Era-EngA-EngB-Septin-like GTPase superfamily. EngA (Der) GTPase family. As to quaternary structure, associates with the 50S ribosomal subunit.

In terms of biological role, GTPase that plays an essential role in the late steps of ribosome biogenesis. The chain is GTPase Der from Rickettsia rickettsii (strain Iowa).